The following is a 239-amino-acid chain: MLTRKQQELLLFIHERMKESGVPPSFDEMKDALDLASKSGIHRLITALEERGFIRRLPNRARALEVIKLPEAYSPSLQPRRGFSPSVIEGSLGKPPAVAAPAAAKPIADNGNSVSVPVMGRIAAGVPISAIQNNTHDIVVPADMLGSGEHYALEVKGDSMIDAGIFDGDTVIIRNGSTASPGDIVVALVDDEEATLKRFRRKGASIALEAANPAYETRIFGPDRVKVQGKLVGLIRRYH.

Residues 26 to 46 (FDEMKDALDLASKSGIHRLIT) constitute a DNA-binding region (H-T-H motif). Residues S159 and K197 each act as for autocatalytic cleavage activity in the active site.

Belongs to the peptidase S24 family. In terms of assembly, homodimer.

The catalysed reaction is Hydrolysis of Ala-|-Gly bond in repressor LexA.. Its function is as follows. Represses a number of genes involved in the response to DNA damage (SOS response), including recA and lexA. In the presence of single-stranded DNA, RecA interacts with LexA causing an autocatalytic cleavage which disrupts the DNA-binding part of LexA, leading to derepression of the SOS regulon and eventually DNA repair. This is LexA repressor from Rhizobium etli (strain CIAT 652).